A 119-amino-acid chain; its full sequence is Ribosome-binding factor A (119 aa).

It belongs to the RbfA family. In terms of assembly, monomer. Binds 30S ribosomal subunits, but not 50S ribosomal subunits or 70S ribosomes.

The protein localises to the cytoplasm. In terms of biological role, one of several proteins that assist in the late maturation steps of the functional core of the 30S ribosomal subunit. Associates with free 30S ribosomal subunits (but not with 30S subunits that are part of 70S ribosomes or polysomes). Required for efficient processing of 16S rRNA. May interact with the 5'-terminal helix region of 16S rRNA. The sequence is that of Ribosome-binding factor A from Wolinella succinogenes (strain ATCC 29543 / DSM 1740 / CCUG 13145 / JCM 31913 / LMG 7466 / NCTC 11488 / FDC 602W) (Vibrio succinogenes).